The following is a 138-amino-acid chain: MRILGLDLGTKTLGVALSDEMGWTAQGIETIKINEAEGDYGLSRLSELIKDYTIDKIVLGFPKNMNGTVGPRGEASQTFAKVLETTYNVPVVLWDERLTTMAAEKMLIAADVSRQKRKKVIDKMAAVMILQGYLDSLN.

The protein belongs to the YqgF nuclease family.

It is found in the cytoplasm. Its function is as follows. Could be a nuclease involved in processing of the 5'-end of pre-16S rRNA. In Bacillus subtilis (strain 168), this protein is Putative pre-16S rRNA nuclease (yrrK).